The chain runs to 125 residues: Photosystem I reaction center subunit IV, chloroplastic (125 aa).

Residues 1 to 34 (MASIASSVAVRLGLTQVLPNKNFSSPRSTRLVVR) constitute a chloroplast transit peptide. Residues 42–57 (APAAASPEGEAPKAAA) are compositionally biased toward low complexity. Positions 42-68 (APAAASPEGEAPKAAAKPPPIGPKRGS) are disordered.

The protein belongs to the PsaE family.

The protein localises to the plastid. Its subcellular location is the chloroplast thylakoid membrane. Its function is as follows. Stabilizes the interaction between PsaC and the PSI core, assists the docking of the ferredoxin to PSI and interacts with ferredoxin-NADP oxidoreductase. The sequence is that of Photosystem I reaction center subunit IV, chloroplastic (PSAE-1) from Spinacia oleracea (Spinach).